A 955-amino-acid polypeptide reads, in one-letter code: Mediator of RNA polymerase II transcription subunit 16 (955 aa).

Belongs to the Mediator complex subunit 16 family. In terms of assembly, component of the Mediator complex.

The protein resides in the nucleus. Its function is as follows. Component of the Mediator complex, a coactivator involved in the regulated transcription of nearly all RNA polymerase II-dependent genes. Mediator functions as a bridge to convey information from gene-specific regulatory proteins to the basal RNA polymerase II transcription machinery. Mediator is recruited to promoters by direct interactions with regulatory proteins and serves as a scaffold for the assembly of a functional preinitiation complex with RNA polymerase II and the general transcription factors. In Neosartorya fischeri (strain ATCC 1020 / DSM 3700 / CBS 544.65 / FGSC A1164 / JCM 1740 / NRRL 181 / WB 181) (Aspergillus fischerianus), this protein is Mediator of RNA polymerase II transcription subunit 16 (sin4).